Reading from the N-terminus, the 388-residue chain is Succinate--CoA ligase [ADP-forming] subunit beta (388 aa).

In terms of domain architecture, ATP-grasp spans 9-244; it reads KQLFAEYGLP…PSQDDPREAH (236 aa). ATP contacts are provided by residues K46, 53 to 55, E99, T102, and E107; that span reads GRG. Positions 199 and 213 each coordinate Mg(2+). Substrate is bound by residues N264 and 321 to 323; that span reads GIV.

The protein belongs to the succinate/malate CoA ligase beta subunit family. In terms of assembly, heterotetramer of two alpha and two beta subunits. It depends on Mg(2+) as a cofactor.

The enzyme catalyses succinate + ATP + CoA = succinyl-CoA + ADP + phosphate. It carries out the reaction GTP + succinate + CoA = succinyl-CoA + GDP + phosphate. The protein operates within carbohydrate metabolism; tricarboxylic acid cycle; succinate from succinyl-CoA (ligase route): step 1/1. Succinyl-CoA synthetase functions in the citric acid cycle (TCA), coupling the hydrolysis of succinyl-CoA to the synthesis of either ATP or GTP and thus represents the only step of substrate-level phosphorylation in the TCA. The beta subunit provides nucleotide specificity of the enzyme and binds the substrate succinate, while the binding sites for coenzyme A and phosphate are found in the alpha subunit. The sequence is that of Succinate--CoA ligase [ADP-forming] subunit beta from Pseudomonas fluorescens (strain SBW25).